Here is a 230-residue protein sequence, read N- to C-terminus: Movement and silencing protein TGBp1 (230 aa).

A (+)RNA virus helicase ATP-binding domain is found at 1 to 114 (MDSIINALTS…GLALRPHFIK (114 aa)). Residues 115–230 (SVSHRLCPAT…VRSPPPHPSH (116 aa)) form the (+)RNA virus helicase C-terminal domain.

It belongs to the Tymovirales TGBp1 protein family. As to quaternary structure, homodimer and homooligomer. Interacts with capsid protein. Interacts with host AGO1; this interaction targets the host protein for degradation, thereby suppressing the antiviral RNA silencing.

Its subcellular location is the host cytoplasm. Transports viral genome to neighboring plant cells directly through plasmosdesmata, without any budding. The movement protein allows efficient cell to cell propagation, by bypassing the host cell wall barrier. Increases plasmodesma size exclusion limit. Acts as a suppressor of RNA-mediated gene silencing, also known as post-transcriptional gene silencing (PTGS), a mechanism of plant viral defense that limits the accumulation of viral RNAs. This is Movement and silencing protein TGBp1 from Plantago asiatica (P1AMV).